Consider the following 78-residue polypeptide: Probable [Fe-S]-dependent transcriptional repressor (78 aa).

Residues Cys56, Cys61, Cys64, and Cys70 each contribute to the iron-sulfur cluster site.

The protein belongs to the FeoC family.

In terms of biological role, may function as a transcriptional regulator that controls feoABC expression. This chain is Probable [Fe-S]-dependent transcriptional repressor, found in Escherichia fergusonii (strain ATCC 35469 / DSM 13698 / CCUG 18766 / IAM 14443 / JCM 21226 / LMG 7866 / NBRC 102419 / NCTC 12128 / CDC 0568-73).